The sequence spans 273 residues: NH(3)-dependent NAD(+) synthetase (273 aa).

Position 47 to 54 (47 to 54 (GISGGQDS)) interacts with ATP. Residue Asp-53 coordinates Mg(2+). Deamido-NAD(+) is bound at residue Arg-139. Thr-159 provides a ligand contact to ATP. Mg(2+) is bound at residue Glu-164. Deamido-NAD(+)-binding residues include Lys-172 and Asp-179. Residues Lys-188 and Thr-210 each contribute to the ATP site. Residue 259 to 260 (HK) coordinates deamido-NAD(+).

The protein belongs to the NAD synthetase family. As to quaternary structure, homodimer.

The enzyme catalyses deamido-NAD(+) + NH4(+) + ATP = AMP + diphosphate + NAD(+) + H(+). The protein operates within cofactor biosynthesis; NAD(+) biosynthesis; NAD(+) from deamido-NAD(+) (ammonia route): step 1/1. In terms of biological role, catalyzes the ATP-dependent amidation of deamido-NAD to form NAD. Uses ammonia as a nitrogen source. The chain is NH(3)-dependent NAD(+) synthetase from Staphylococcus aureus (strain bovine RF122 / ET3-1).